Consider the following 460-residue polypeptide: Nuclear distribution protein PAC1 (460 aa).

The LisH domain maps to 9–41 (QAEELHKSIIAYLAANNLQDSANAMRTELGLGE). Residues 61-88 (TSVVRLQKKIMDLEAQTQTLQTELNSAT) adopt a coiled-coil conformation. A compositionally biased stretch (polar residues) spans 82–92 (TELNSATPTSN). The disordered stretch occupies residues 82 to 105 (TELNSATPTSNRRGDPSSWLPAGP). 7 WD repeats span residues 112-153 (SHRT…RTVK), 155-195 (HTKA…QNIR), 199-246 (GHDH…CVKT), 249-288 (GHAD…PEAK), 293-354 (GHEH…KTLI), 355-394 (GHDN…KCVK), and 399-456 (SHEH…MSLR). The interval 414-433 (IKDKGPGEETNGDVGTPKKA) is disordered.

This sequence belongs to the WD repeat LIS1/nudF family. Self-associates. Interacts with NDL1 and dynein.

Its subcellular location is the cytoplasm. The protein localises to the cytoskeleton. It localises to the spindle pole. Its function is as follows. Positively regulates the activity of the minus-end directed microtubule motor protein dynein. May enhance dynein-mediated microtubule sliding by targeting dynein to the microtubule plus end. Required for nuclear migration during vegetative growth as well as development. Required for retrograde early endosome (EE) transport from the hyphal tip. Required for localization of dynein to the mitotic spindle poles. Recruits additional proteins to the dynein complex at SPBs. This chain is Nuclear distribution protein PAC1, found in Gibberella zeae (strain ATCC MYA-4620 / CBS 123657 / FGSC 9075 / NRRL 31084 / PH-1) (Wheat head blight fungus).